Here is a 146-residue protein sequence, read N- to C-terminus: D-aminoacyl-tRNA deacylase (146 aa).

The Gly-cisPro motif, important for rejection of L-amino acids motif lies at 137-138 (GP).

The protein belongs to the DTD family. In terms of assembly, homodimer.

It localises to the cytoplasm. The enzyme catalyses glycyl-tRNA(Ala) + H2O = tRNA(Ala) + glycine + H(+). It catalyses the reaction a D-aminoacyl-tRNA + H2O = a tRNA + a D-alpha-amino acid + H(+). An aminoacyl-tRNA editing enzyme that deacylates mischarged D-aminoacyl-tRNAs. Also deacylates mischarged glycyl-tRNA(Ala), protecting cells against glycine mischarging by AlaRS. Acts via tRNA-based rather than protein-based catalysis; rejects L-amino acids rather than detecting D-amino acids in the active site. By recycling D-aminoacyl-tRNA to D-amino acids and free tRNA molecules, this enzyme counteracts the toxicity associated with the formation of D-aminoacyl-tRNA entities in vivo and helps enforce protein L-homochirality. This Bacillus cereus (strain Q1) protein is D-aminoacyl-tRNA deacylase.